Reading from the N-terminus, the 568-residue chain is MSVSTFNRCWSKVILETLTRHGVKHFCIAPGSRSTPLTLEANRLQEQRRALCHTHFDERGLGFFALGLAKSSQTPVAIIVTSGTAAANLYPAIIEARQTGDNLIVLTADRPDELIECGANQAILQQNMFAGYPVASVNLPRPSQDYIVSWLISTLDQACHQQAQQAGVIHINVPFAEPLYDADEDEIDVHPWLAPVQRWLNHNKPWADHQALQEEVVMHEHWDNWRTKRGVIVAGRLTQEQSMGITAWANTMGWVVLTDIQSGVEPSLPYADIWLANKTVREKLLQADLVIQLGYAFVSKRINQFLADFKGEYWIVDESAHRVDPYHHIHTRFTAKVHHWLRAHPPLRQKPWLLEPLALSKFCASFIEQQVGGNLNEASLAHHIERILPNNGILFLGNSLFVRLVDALGKLPEGYPVITNRGASGIDGLLATAAGVGMGSNQPVVAMIGDVSALYDLNSLALFKNVNQPTIIFLINNNGGAIFDMLPVESSVKSEFYRMPHHTEFSQAASMFDLKYARPYTWADLSSVLKQAYSRKEATVIEIKVGPMDGSNTYKRLIEQISYAVIGA.

The protein belongs to the TPP enzyme family. MenD subfamily. As to quaternary structure, homodimer. It depends on Mg(2+) as a cofactor. The cofactor is Mn(2+). Thiamine diphosphate serves as cofactor.

It carries out the reaction isochorismate + 2-oxoglutarate + H(+) = 5-enolpyruvoyl-6-hydroxy-2-succinyl-cyclohex-3-ene-1-carboxylate + CO2. Its pathway is quinol/quinone metabolism; 1,4-dihydroxy-2-naphthoate biosynthesis; 1,4-dihydroxy-2-naphthoate from chorismate: step 2/7. It participates in quinol/quinone metabolism; menaquinone biosynthesis. Catalyzes the thiamine diphosphate-dependent decarboxylation of 2-oxoglutarate and the subsequent addition of the resulting succinic semialdehyde-thiamine pyrophosphate anion to isochorismate to yield 2-succinyl-5-enolpyruvyl-6-hydroxy-3-cyclohexene-1-carboxylate (SEPHCHC). This Mannheimia succiniciproducens (strain KCTC 0769BP / MBEL55E) protein is 2-succinyl-5-enolpyruvyl-6-hydroxy-3-cyclohexene-1-carboxylate synthase.